The following is a 154-amino-acid chain: Transcriptional repressor NrdR (154 aa).

The segment at Cys-3–Cys-34 is a zinc-finger region. The ATP-cone domain maps to Pro-49 to Asp-139.

It belongs to the NrdR family. Zn(2+) is required as a cofactor.

Its function is as follows. Negatively regulates transcription of bacterial ribonucleotide reductase nrd genes and operons by binding to NrdR-boxes. In Neisseria meningitidis serogroup A / serotype 4A (strain DSM 15465 / Z2491), this protein is Transcriptional repressor NrdR.